The chain runs to 776 residues: Microtubule-associated protein tau (776 aa).

Basic and acidic residues predominate over residues 1 to 26 (MAEPRQEFDVMEDHAGTYGLGDRKDQ). Residues 1–591 (MAEPRQEFDV…PVPMPDLKNV (591 aa)) form a disordered region. N-acetylalanine is present on A2. Residues Y18 and Y29 each carry the phosphotyrosine modification. A Glycyl lysine isopeptide (Lys-Gly) (interchain with G-Cter in ubiquitin) cross-link involves residue K44. Residues S46 and S61 each carry the phosphoserine modification. Over residues 61-71 (SETSDAKSTPT) the composition is skewed to polar residues. A phosphothreonine mark is found at T69, T71, and T111. Basic and acidic residues-rich tracts occupy residues 179–189 (EGGRHAPELLK) and 207–216 (GGKERPGIKE). A compositionally biased stretch (acidic residues) spans 217-228 (EVDEDRDVDESS). Residues 314–323 (EQAHSEEHLG) show a composition bias toward basic and acidic residues. A compositionally biased stretch (low complexity) spans 325–340 (AAFPGAPGEGPEAQGP). 2 stretches are compositionally biased toward basic and acidic residues: residues 344 to 356 (EDTK…EPSE) and 381 to 393 (KSKD…DKKA). Residues 442-453 (VSSVTXRTGSSG) show a composition bias toward low complexity. The segment covering 455–466 (KEMKLKGADGKT) has biased composition (basic and acidic residues). A Phosphothreonine modification is found at T470. R472 carries the post-translational modification Omega-N-methylarginine. K480 bears the N6,N6-dimethyllysine; alternate mark. K480 carries the post-translational modification N6-acetyllysine; alternate. 3 positions are modified to phosphothreonine: T486, T492, and T498. Residues S502, S526, and S530 each carry the phosphoserine modification. Basic and acidic residues predominate over residues 517–528 (KSERGEPPKSGD). Low complexity predominate over residues 529-549 (RSGYSSPGSPGTPGSRSRTPS). The residue at position 532 (Y532) is a Phosphotyrosine. Phosphoserine occurs at positions 533, 534, and 537. 2 positions are modified to phosphothreonine: T540 and T547. S549 carries the post-translational modification Phosphoserine. Position 552 is a phosphothreonine (T552). K560 is modified (N6-acetyllysine). T566 carries the phosphothreonine modification. S570 and S572 each carry phosphoserine. Tau/MAP repeat units lie at residues 579 to 609 (QTAP…GGGK), 610 to 640 (VQII…GGGS), 641 to 671 (VQIV…GGGQ), and 672 to 703 (VEVK…GGGN). K589 participates in a covalent cross-link: Glycyl lysine isopeptide (Lys-Gly) (interchain with G-Cter in ubiquitin). K594 carries the post-translational modification N6-acetyllysine; alternate. The residue at position 594 (K594) is an N6-methyllysine; alternate. Residue K594 forms a Glycyl lysine isopeptide (Lys-Gly) (interchain with G-Cter in ubiquitin); alternate linkage. A Phosphoserine modification is found at S597. K602 participates in a covalent cross-link: Glycyl lysine isopeptide (Lys-Gly) (interchain with G-Cter in ubiquitin). K616 bears the N6-acetyllysine; alternate mark. A Glycyl lysine isopeptide (Lys-Gly) (interchain with G-Cter in ubiquitin); alternate cross-link involves residue K616. Residues S620 and S624 each carry the phosphoserine modification. An N6-acetyllysine modification is found at K625. S628 is subject to Phosphoserine. Residue K633 is modified to N6-acetyllysine; alternate. A Glycyl lysine isopeptide (Lys-Gly) (interchain with G-Cter in ubiquitin); alternate cross-link involves residue K633. The residue at position 640 (S640) is a Phosphoserine. The residue at position 646 (K646) is an N6,N6-dimethyllysine; alternate. N6-acetyllysine; alternate is present on residues K646, K652, and K656. Glycyl lysine isopeptide (Lys-Gly) (interchain with G-Cter in ubiquitin); alternate cross-links involve residues K646, K652, and K656. S659 carries the phosphoserine modification. 3 positions are modified to N6-acetyllysine; alternate: K666, K678, and K682. Glycyl lysine isopeptide (Lys-Gly) (interchain with G-Cter in ubiquitin); alternate cross-links involve residues K666, K678, and K682. R684 carries the omega-N-methylarginine modification. S687 carries the phosphoserine modification. A Glycyl lysine isopeptide (Lys-Gly) (interchain with G-Cter in ubiquitin) cross-link involves residue K688. Residue S691 is modified to Phosphoserine. At K704 the chain carries N6-acetyllysine; alternate. K704 participates in a covalent cross-link: Glycyl lysine isopeptide (Lys-Gly) (interchain with G-Cter in ubiquitin); alternate. A Glycyl lysine isopeptide (Lys-Gly) (interchain with G-Cter in ubiquitin) cross-link involves residue K710. Residue K720 is modified to N6-acetyllysine; alternate. Residue K720 forms a Glycyl lysine isopeptide (Lys-Gly) (interchain with G-Cter in ubiquitin); alternate linkage. Y729 bears the Phosphotyrosine mark. Phosphoserine is present on residues S731 and S735. The segment at 733 to 752 (VVSGDTSPRHLSNVSSTGSI) is disordered. A compositionally biased stretch (polar residues) spans 736-751 (GDTSPRHLSNVSSTGS). A Phosphothreonine modification is found at T738. Phosphoserine occurs at positions 739, 744, 751, and 757. T762 is modified (phosphothreonine).

Interacts with MARK1, MARK2, MARK3 and MARK4. Interacts with SQSTM1 when polyubiquitinated. Interacts with PSMC2 through SQSTM1. Interacts with FKBP4. Binds to CSNK1D. Interacts with SGK1. Interacts with EPM2A; the interaction dephosphorylates MAPT at Ser-396. Interacts with PIN1. Interacts with LRRK2. Interacts with LRP1, leading to endocytosis; this interaction is reduced in the presence of LRPAP1/RAP. Polyubiquitinated. Requires functional TRAF6 and may provoke SQSTM1-dependent degradation by the proteasome. In terms of processing, phosphorylation at various serine and threonine residues in S-P or T-P motifs by proline-directed protein kinases (PDPK1, CDK1, CDK5, GSK3, MAPK) (a few sites per protein in interphase, more in mitosis), and at serine residues in K-X-G-S motifs by MAP/microtubule affinity-regulating kinase (MARK1, MARK2, MARK3 or MARK4), causing detachment from microtubules, and their disassembly. Phosphorylation at Ser-597 by BRSK1 and BRSK2 in neurons affects ability to bind microtubules and plays a role in neuron polarization. Phosphorylated by PHK. Dephosphorylation at several serine and threonine residues by the serine/threonine phosphatase PPP5C.

The protein resides in the cytoplasm. It localises to the cytosol. Its subcellular location is the cell membrane. It is found in the cytoskeleton. The protein localises to the cell projection. The protein resides in the axon. It localises to the dendrite. Its function is as follows. Promotes microtubule assembly and stability, and might be involved in the establishment and maintenance of neuronal polarity. The C-terminus binds axonal microtubules while the N-terminus binds neural plasma membrane components, suggesting that tau functions as a linker protein between both. Axonal polarity is predetermined by tau localization (in the neuronal cell) in the domain of the cell body defined by the centrosome. The short isoforms allow plasticity of the cytoskeleton whereas the longer isoforms may preferentially play a role in its stabilization. This chain is Microtubule-associated protein tau (MAPT), found in Hylobates lar (Lar gibbon).